Here is a 145-residue protein sequence, read N- to C-terminus: 3-hydroxyacyl-[acyl-carrier-protein] dehydratase FabZ (145 aa).

Residue histidine 47 is part of the active site.

The protein belongs to the thioester dehydratase family. FabZ subfamily.

The protein resides in the cytoplasm. The catalysed reaction is a (3R)-hydroxyacyl-[ACP] = a (2E)-enoyl-[ACP] + H2O. Involved in unsaturated fatty acids biosynthesis. Catalyzes the dehydration of short chain beta-hydroxyacyl-ACPs and long chain saturated and unsaturated beta-hydroxyacyl-ACPs. The sequence is that of 3-hydroxyacyl-[acyl-carrier-protein] dehydratase FabZ from Methylobacillus flagellatus (strain ATCC 51484 / DSM 6875 / VKM B-1610 / KT).